The following is a 202-amino-acid chain: Holliday junction branch migration complex subunit RuvA (202 aa).

Positions 1–64 (MIGYLKGQIL…YDGTVLYGFL (64 aa)) are domain I. A domain II region spans residues 65–146 (TKEDKQLWAI…AVTIAGVPKI (82 aa)). Residues 147–155 (KIEGEAPFM) are flexible linker. The domain III stretch occupies residues 155 to 202 (MSEVMMALTALGYSPMEARKAIDQLYKTGLANDSVENIIRAALRILKK).

It belongs to the RuvA family. As to quaternary structure, homotetramer. Forms an RuvA(8)-RuvB(12)-Holliday junction (HJ) complex. HJ DNA is sandwiched between 2 RuvA tetramers; dsDNA enters through RuvA and exits via RuvB. An RuvB hexamer assembles on each DNA strand where it exits the tetramer. Each RuvB hexamer is contacted by two RuvA subunits (via domain III) on 2 adjacent RuvB subunits; this complex drives branch migration. In the full resolvosome a probable DNA-RuvA(4)-RuvB(12)-RuvC(2) complex forms which resolves the HJ.

It localises to the cytoplasm. In terms of biological role, the RuvA-RuvB-RuvC complex processes Holliday junction (HJ) DNA during genetic recombination and DNA repair, while the RuvA-RuvB complex plays an important role in the rescue of blocked DNA replication forks via replication fork reversal (RFR). RuvA specifically binds to HJ cruciform DNA, conferring on it an open structure. The RuvB hexamer acts as an ATP-dependent pump, pulling dsDNA into and through the RuvAB complex. HJ branch migration allows RuvC to scan DNA until it finds its consensus sequence, where it cleaves and resolves the cruciform DNA. The protein is Holliday junction branch migration complex subunit RuvA of Elusimicrobium minutum (strain Pei191).